Consider the following 658-residue polypeptide: PTS system 2-O-alpha-mannosyl-D-glycerate-specific EIIABC component (658 aa).

The Periplasmic segment spans residues 1–313; sequence MVLFYRAHWR…TELKQALLSG (313 aa). The PTS EIIA type-2 domain occupies 25-171; it reads TLTHRDALCL…DELLSALDDK (147 aa). The active-site Tele-phosphohistidine intermediate; for EIIA activity is the His87. At His87 the chain carries Phosphohistidine; by HPr. One can recognise a PTS EIIB type-2 domain in the interval 186–282; sequence IVCVTACPAG…AEALIQQALT (97 aa). The Phosphocysteine intermediate; for EIIB activity role is filled by Cys192. Cys192 carries the phosphocysteine; by EIIA modification. The region spanning 306 to 641 is the PTS EIIC type-2 domain; it reads LKQALLSGIS…AISTAILLMW (336 aa). A helical transmembrane segment spans residues 314 to 334; the sequence is ISFAVPLIVAGGTVLAVAVLL. At 335–358 the chain is on the cytoplasmic side; that stretch reads SQIFGLQDLFNEENSWLWMYRKLG. Residues 359–379 traverse the membrane as a helical segment; it reads GGLLGILMVPVLAAYTAYSLA. Residues 380 to 389 are Periplasmic-facing; the sequence is DKPALAPGFA. A helical transmembrane segment spans residues 390 to 410; it reads AGLAANMIGSGFLGAVVGGLI. Residues 411-433 lie on the Cytoplasmic side of the membrane; sequence AGYLMRWVKNHLRLSSKFNGFLT. Residues 434–454 form a helical membrane-spanning segment; it reads FYLYPVLGTLGAGSLMLFVVG. Residues 455-474 are Periplasmic-facing; that stretch reads EPVAWINNSLTAWLNGLSGS. The helical transmembrane segment at 475–495 threads the bilayer; it reads NALLLGAILGFMCSFDLGGPV. At 496–500 the chain is on the cytoplasmic side; sequence NKAAY. Residues 501–521 form a helical membrane-spanning segment; the sequence is AFCLGAMANGVYGPYAIFASV. The Periplasmic segment spans residues 522 to 551; that stretch reads KMVSAFTVTASTMLAPRLFKEFEIETGKST. A helical membrane pass occupies residues 552 to 572; sequence WLLGLAGITEGAIPMAIEDPL. A topological domain (cytoplasmic) is located at residue Arg573. Residues 574-594 form a helical membrane-spanning segment; it reads VIGSFVLGSMVTGAIVGAMNI. The Periplasmic portion of the chain corresponds to 595 to 620; sequence GLSTPGAGIFSLFLLHDNGAGGVMAA. A helical transmembrane segment spans residues 621–641; the sequence is IGWFGAALVGAAISTAILLMW. Topologically, residues 642 to 658 are cytoplasmic; it reads RRHAVKHGNYLTDGVMP.

It localises to the cell inner membrane. The enzyme catalyses (2R)-2-O-(alpha-D-mannosyl)-glycerate(out) + N(pros)-phospho-L-histidyl-[protein] = (2R)-2-O-(6-phospho-alpha-D-mannosyl)-glycerate(in) + L-histidyl-[protein]. The phosphoenolpyruvate-dependent sugar phosphotransferase system (sugar PTS), a major carbohydrate active transport system, catalyzes the phosphorylation of incoming sugar substrates concomitantly with their translocation across the cell membrane. This system is involved in mannosyl-D-glycerate transport. Also involved in thermoinduction of ompC. In Escherichia coli (strain K12), this protein is PTS system 2-O-alpha-mannosyl-D-glycerate-specific EIIABC component.